The sequence spans 449 residues: Xaa-Pro dipeptidase (449 aa).

Residues aspartate 246, aspartate 257, histidine 345, glutamate 390, and glutamate 429 each contribute to the Mn(2+) site.

The protein belongs to the peptidase M24B family. Bacterial-type prolidase subfamily. Requires Mn(2+) as cofactor.

The enzyme catalyses Xaa-L-Pro dipeptide + H2O = an L-alpha-amino acid + L-proline. Splits dipeptides with a prolyl residue in the C-terminal position. The sequence is that of Xaa-Pro dipeptidase from Yersinia enterocolitica serotype O:8 / biotype 1B (strain NCTC 13174 / 8081).